We begin with the raw amino-acid sequence, 794 residues long: ALG-2 interacting protein X (794 aa).

One can recognise a BRO1 domain in the interval 1–385 (MLSIERKRTE…DNIEFHNQSA (385 aa)). Coiled coils occupy residues 499 to 568 (SFIR…LCKK) and 600 to 655 (LNES…NLDE). The tract at residues 695 to 794 (GVNPHSPLTS…PPYNSNNKHY (100 aa)) is disordered. Over residues 698–712 (PHSPLTSPSPSLQSP) the composition is skewed to low complexity. Residues 713–722 (VNNYPNQFSS) are compositionally biased toward polar residues. Composition is skewed to low complexity over residues 723–742 (PQYH…YVPS) and 749–764 (YSYN…QFGG). The segment covering 765–787 (PLPPPQSFSAPPPPQSFTAPPPY) has biased composition (pro residues).

Self-associates; the interaction is calcium-independent Interacts with pefa; the interaction is calcium-dependent. Interacts with pefb; the interaction is calcium-dependent.

It is found in the cytoplasm. The protein localises to the cytoplasmic vesicle membrane. Its subcellular location is the endosome. Unknown. Required for development but not for cell death. This Dictyostelium discoideum (Social amoeba) protein is ALG-2 interacting protein X (alxA).